Consider the following 405-residue polypeptide: MAVKTLKDLLDEGVDGRHVIVRSDFNVPLNDDREITDKGRIIASLPTLKALTEAGAKVIVMSHLGRPKGEVNEKYSLAPVAEALSDELGQYVALAADVVGEDAHERANGLTEGDILLLENVRFDPRETSKDEAERGAFADELAALAADNGAFVSDGFGVVHRAQTSVYDIAKRLPHYAGRLVENEISVLEKIAENPEAPYTVVLGGSKVSDKLGVIEALASKADSIIIGGGMCYTFLKAQGHDVQKSMLQDEMIDTCKDLLERFGDKIVLPVDLTWASEFAKDAEKKVTDLDSAPEGWLSLDIGPKSVEKFADVLGASKTIFWNGPMGVFEFEAFSDGTRGVAQAIIDATANNGAFSVVGGGDSAASVRVLGLDEEGFSHISTGGGASLEFLEGKELPGVAILKD.

Substrate contacts are provided by residues 24 to 26 (DFN), Arg40, 63 to 66 (HLGR), Arg122, and Arg162. Residues Lys212, Glu331, and 361-364 (GGDS) contribute to the ATP site.

Belongs to the phosphoglycerate kinase family. Monomer.

The protein localises to the cytoplasm. The enzyme catalyses (2R)-3-phosphoglycerate + ATP = (2R)-3-phospho-glyceroyl phosphate + ADP. It participates in carbohydrate degradation; glycolysis; pyruvate from D-glyceraldehyde 3-phosphate: step 2/5. The protein is Phosphoglycerate kinase of Corynebacterium efficiens (strain DSM 44549 / YS-314 / AJ 12310 / JCM 11189 / NBRC 100395).